A 1749-amino-acid polypeptide reads, in one-letter code: Transposon Ty1-NL2 Gag-Pol polyprotein (1749 aa).

4 stretches are compositionally biased toward polar residues: residues methionine 1–serine 23, threonine 48–serine 60, serine 71–asparagine 97, and glutamine 129–phenylalanine 152. Disordered stretches follow at residues methionine 1–asparagine 97, glutamine 129–proline 171, and glycine 352–threonine 421. Residues threonine 153–threonine 165 show a composition bias toward low complexity. The RNA-binding stretch occupies residues asparagine 299–histidine 401. Low complexity predominate over residues asparagine 402–serine 418. The active-site For protease activity; shared with dimeric partner is the aspartate 461. The segment at asparagine 583–cysteine 640 is integrase-type zinc finger-like. The 176-residue stretch at asparagine 660–proline 835 folds into the Integrase catalytic domain. Mg(2+) contacts are provided by aspartate 671 and aspartate 736. The interval proline 945–tyrosine 1166 is disordered. Low complexity predominate over residues serine 954–threonine 963. Positions serine 999–threonine 1009 are enriched in polar residues. The segment covering glutamate 1032–serine 1047 has biased composition (basic and acidic residues). 2 stretches are compositionally biased toward polar residues: residues tyrosine 1048–glutamate 1076 and serine 1089–leucine 1100. The Bipartite nuclear localization signal signature appears at lysine 1172–arginine 1206. Residues asparagine 1332–glutamine 1470 enclose the Reverse transcriptase Ty1/copia-type domain. Aspartate 1340, aspartate 1421, aspartate 1422, aspartate 1604, glutamate 1646, and aspartate 1679 together coordinate Mg(2+). The region spanning aspartate 1604–lysine 1746 is the RNase H Ty1/copia-type domain.

In terms of assembly, the capsid protein forms a homotrimer, from which the VLPs are assembled. The protease is a homodimer, whose active site consists of two apposed aspartic acid residues. Post-translationally, initially, virus-like particles (VLPs) are composed of the structural unprocessed proteins Gag and Gag-Pol, and also contain the host initiator methionine tRNA (tRNA(i)-Met) which serves as a primer for minus-strand DNA synthesis, and a dimer of genomic Ty RNA. Processing of the polyproteins occurs within the particle and proceeds by an ordered pathway, called maturation. First, the protease (PR) is released by autocatalytic cleavage of the Gag-Pol polyprotein yielding capsid protein p45 and a Pol-p154 precursor protein. This cleavage is a prerequisite for subsequent processing of Pol-p154 at the remaining sites to release the mature structural and catalytic proteins. Maturation takes place prior to the RT reaction and is required to produce transposition-competent VLPs.

The protein localises to the cytoplasm. It localises to the nucleus. It carries out the reaction DNA(n) + a 2'-deoxyribonucleoside 5'-triphosphate = DNA(n+1) + diphosphate. The enzyme catalyses Endonucleolytic cleavage to 5'-phosphomonoester.. In terms of biological role, capsid protein (CA) is the structural component of the virus-like particle (VLP), forming the shell that encapsulates the retrotransposons dimeric RNA genome. The particles are assembled from trimer-clustered units and there are holes in the capsid shells that allow for the diffusion of macromolecules. CA also has nucleocapsid-like chaperone activity, promoting primer tRNA(i)-Met annealing to the multipartite primer-binding site (PBS), dimerization of Ty1 RNA and initiation of reverse transcription. The aspartyl protease (PR) mediates the proteolytic cleavages of the Gag and Gag-Pol polyproteins after assembly of the VLP. Its function is as follows. Reverse transcriptase/ribonuclease H (RT) is a multifunctional enzyme that catalyzes the conversion of the retro-elements RNA genome into dsDNA within the VLP. The enzyme displays a DNA polymerase activity that can copy either DNA or RNA templates, and a ribonuclease H (RNase H) activity that cleaves the RNA strand of RNA-DNA heteroduplexes during plus-strand synthesis and hydrolyzes RNA primers. The conversion leads to a linear dsDNA copy of the retrotransposon that includes long terminal repeats (LTRs) at both ends. Functionally, integrase (IN) targets the VLP to the nucleus, where a subparticle preintegration complex (PIC) containing at least integrase and the newly synthesized dsDNA copy of the retrotransposon must transit the nuclear membrane. Once in the nucleus, integrase performs the integration of the dsDNA into the host genome. In Saccharomyces cerevisiae (strain ATCC 204508 / S288c) (Baker's yeast), this protein is Transposon Ty1-NL2 Gag-Pol polyprotein (TY1B-NL2).